We begin with the raw amino-acid sequence, 1072 residues long: Carbamoyl phosphate synthase large chain (1072 aa).

A carboxyphosphate synthetic domain region spans residues methionine 1 to glutamate 401. Residues arginine 129, arginine 169, glycine 175, glycine 176, lysine 208, isoleucine 210, glutamate 215, glycine 241, valine 242, histidine 243, glutamine 284, and glutamate 298 each contribute to the ATP site. An ATP-grasp 1 domain is found at arginine 133 to valine 327. Glutamine 284, glutamate 298, and asparagine 300 together coordinate Mg(2+). 3 residues coordinate Mn(2+): glutamine 284, glutamate 298, and asparagine 300. The segment at leucine 402–serine 546 is oligomerization domain. Positions valine 547–glycine 929 are carbamoyl phosphate synthetic domain. Residues glutamate 671 to leucine 861 enclose the ATP-grasp 2 domain. ATP is bound by residues arginine 707, arginine 746, glutamate 752, glycine 777, valine 778, histidine 779, serine 780, glutamine 820, and glutamate 832. Glutamine 820, glutamate 832, and asparagine 834 together coordinate Mg(2+). 3 residues coordinate Mn(2+): glutamine 820, glutamate 832, and asparagine 834. An MGS-like domain is found at isoleucine 930–alanine 1072. The tract at residues isoleucine 930–alanine 1072 is allosteric domain.

Belongs to the CarB family. Composed of two chains; the small (or glutamine) chain promotes the hydrolysis of glutamine to ammonia, which is used by the large (or ammonia) chain to synthesize carbamoyl phosphate. Tetramer of heterodimers (alpha,beta)4. Requires Mg(2+) as cofactor. The cofactor is Mn(2+).

The enzyme catalyses hydrogencarbonate + L-glutamine + 2 ATP + H2O = carbamoyl phosphate + L-glutamate + 2 ADP + phosphate + 2 H(+). It catalyses the reaction hydrogencarbonate + NH4(+) + 2 ATP = carbamoyl phosphate + 2 ADP + phosphate + 2 H(+). It participates in amino-acid biosynthesis; L-arginine biosynthesis; carbamoyl phosphate from bicarbonate: step 1/1. It functions in the pathway pyrimidine metabolism; UMP biosynthesis via de novo pathway; (S)-dihydroorotate from bicarbonate: step 1/3. Large subunit of the glutamine-dependent carbamoyl phosphate synthetase (CPSase). CPSase catalyzes the formation of carbamoyl phosphate from the ammonia moiety of glutamine, carbonate, and phosphate donated by ATP, constituting the first step of 2 biosynthetic pathways, one leading to arginine and/or urea and the other to pyrimidine nucleotides. The large subunit (synthetase) binds the substrates ammonia (free or transferred from glutamine from the small subunit), hydrogencarbonate and ATP and carries out an ATP-coupled ligase reaction, activating hydrogencarbonate by forming carboxy phosphate which reacts with ammonia to form carbamoyl phosphate. The protein is Carbamoyl phosphate synthase large chain of Bacillus cereus (strain G9842).